A 385-amino-acid chain; its full sequence is MKYDVVVIGGRVAGSTAAYHAARLGLSVLLLERNPEIGTPVQCAGGVSDSFFKSTGLKPLPEFTCTRIRAAAVNGPLGARIVTENPVVRGYILERKSLDKYLALRAAEAGADVLTMSIAGDLIFREGSVSGVVFRGPDGVQEVECGMVIAADGVQSSIARKAGLETGFRPADLCSCVQYEVAGVDVDPETMEFYFGSRFAPSGYLWVFPKGEGRANVGLGIRRKSCSERGPLSYLNRFMEERGFKRIEFNAGAVPVCGPIERTFTDGLLVVGDAAGQVDPLTGGGIHLAAECAKIAGEVAAEAIESGRVDGRFLSRYEMRWRKKIGKNLERSLKFRKILDGLGDEELDALLRSLEGKDLSSISKISLLRILKDYPSMLRILRDIL.

FAD-binding residues include Ala-13, Glu-32, Cys-43, Ala-44, Gly-46, Arg-95, Ala-119, Asp-273, Gly-285, and Ile-286.

Belongs to the geranylgeranyl reductase family. DGGGPL reductase subfamily. FAD serves as cofactor.

It catalyses the reaction a 2,3-bis-O-phytanyl-sn-glycerol 1-phospholipid + 8 A = a 2,3-bis-O-(geranylgeranyl)-sn-glycerol 1-phospholipid + 8 AH2. It carries out the reaction 2,3-bis-O-(phytanyl)-sn-glycerol 1-phosphate + 8 A = 2,3-bis-O-(geranylgeranyl)-sn-glycerol 1-phosphate + 8 AH2. The enzyme catalyses CDP-2,3-bis-O-(geranylgeranyl)-sn-glycerol + 8 AH2 = CDP-2,3-bis-O-(phytanyl)-sn-glycerol + 8 A. The catalysed reaction is archaetidylserine + 8 AH2 = 2,3-bis-O-phytanyl-sn-glycero-3-phospho-L-serine + 8 A. It functions in the pathway membrane lipid metabolism; glycerophospholipid metabolism. Its function is as follows. Is involved in the reduction of 2,3-digeranylgeranylglycerophospholipids (unsaturated archaeols) into 2,3-diphytanylglycerophospholipids (saturated archaeols) in the biosynthesis of archaeal membrane lipids. Catalyzes the formation of archaetidic acid (2,3-di-O-phytanyl-sn-glyceryl phosphate) from 2,3-di-O-geranylgeranylglyceryl phosphate (DGGGP) via the hydrogenation of each double bond of the isoprenoid chains. Is also probably able to reduce double bonds of geranyl groups in CDP-2,3-bis-O-(geranylgeranyl)-sn-glycerol and archaetidylserine, thus acting at various stages in the biosynthesis of archaeal membrane lipids. This chain is Digeranylgeranylglycerophospholipid reductase 2, found in Methanothermobacter thermautotrophicus (strain ATCC 29096 / DSM 1053 / JCM 10044 / NBRC 100330 / Delta H) (Methanobacterium thermoautotrophicum).